Here is a 222-residue protein sequence, read N- to C-terminus: Probable transaldolase (222 aa).

The active-site Schiff-base intermediate with substrate is the K91.

It belongs to the transaldolase family. Type 3B subfamily.

It localises to the cytoplasm. It catalyses the reaction D-sedoheptulose 7-phosphate + D-glyceraldehyde 3-phosphate = D-erythrose 4-phosphate + beta-D-fructose 6-phosphate. The protein operates within carbohydrate degradation; pentose phosphate pathway; D-glyceraldehyde 3-phosphate and beta-D-fructose 6-phosphate from D-ribose 5-phosphate and D-xylulose 5-phosphate (non-oxidative stage): step 2/3. Functionally, transaldolase is important for the balance of metabolites in the pentose-phosphate pathway. The chain is Probable transaldolase from Chlorobium chlorochromatii (strain CaD3).